The chain runs to 304 residues: MGVRKLKPVTNGTRHAVLYDFEEIEKLVRKGKEWVLLKKNQVEPEKSLLKWWHRAKGRSRQRGNITARHRGGGHKKLYRIIDFKRDKSLVPAKVVSIEYDPFRSARICLLHYADGEKRYIIWPEGLKVGDTVMSISWEDAEAGKPLPEIKPGNAMPLKYIPEGTIVHNIEFIPGKGGQIARAAGTWAQVLGRSTRKGYVLVRMPSGEVRMIHERCMATVGRVGLAEHELVKLGKAGRARWLGWRPHTRGTAMNPVDHPHGGGEGRTRGKHPESPWGWKTKGYKTRRGKKYSDQFIVTRRDGRPL.

Residues 246–282 form a disordered region; it reads HTRGTAMNPVDHPHGGGEGRTRGKHPESPWGWKTKGY. Positions 256–272 are enriched in basic and acidic residues; the sequence is DHPHGGGEGRTRGKHPE.

Belongs to the universal ribosomal protein uL2 family. Part of the 50S ribosomal subunit. Forms a bridge to the 30S subunit in the 70S ribosome.

In terms of biological role, one of the primary rRNA binding proteins. Required for association of the 30S and 50S subunits to form the 70S ribosome, for tRNA binding and peptide bond formation. It has been suggested to have peptidyltransferase activity; this is somewhat controversial. Makes several contacts with the 16S rRNA in the 70S ribosome. In Aquifex aeolicus (strain VF5), this protein is Large ribosomal subunit protein uL2.